A 261-amino-acid chain; its full sequence is Large ribosomal subunit protein uL2 (261 aa).

Residues 207–233 (VEHPHGGGNHQHIGKASTVKRGTPPGR) form a disordered region.

The protein belongs to the universal ribosomal protein uL2 family.

It localises to the cytoplasm. This Aedes albopictus (Asian tiger mosquito) protein is Large ribosomal subunit protein uL2 (RpL8).